A 205-amino-acid chain; its full sequence is Potassium-transporting ATPase KdpC subunit (205 aa).

The chain crosses the membrane as a helical span at residues 7-27 (PAIVILVALTIITGLIYPLAM).

The protein belongs to the KdpC family. In terms of assembly, the system is composed of three essential subunits: KdpA, KdpB and KdpC.

The protein resides in the cell inner membrane. Functionally, part of the high-affinity ATP-driven potassium transport (or Kdp) system, which catalyzes the hydrolysis of ATP coupled with the electrogenic transport of potassium into the cytoplasm. This subunit acts as a catalytic chaperone that increases the ATP-binding affinity of the ATP-hydrolyzing subunit KdpB by the formation of a transient KdpB/KdpC/ATP ternary complex. The polypeptide is Potassium-transporting ATPase KdpC subunit (Nitrobacter hamburgensis (strain DSM 10229 / NCIMB 13809 / X14)).